The chain runs to 197 residues: dTTP/UTP pyrophosphatase (197 aa).

Catalysis depends on Asp-70, which acts as the Proton acceptor.

This sequence belongs to the Maf family. YhdE subfamily. A divalent metal cation serves as cofactor.

Its subcellular location is the cytoplasm. It carries out the reaction dTTP + H2O = dTMP + diphosphate + H(+). The enzyme catalyses UTP + H2O = UMP + diphosphate + H(+). Nucleoside triphosphate pyrophosphatase that hydrolyzes dTTP and UTP. May have a dual role in cell division arrest and in preventing the incorporation of modified nucleotides into cellular nucleic acids. The sequence is that of dTTP/UTP pyrophosphatase (yceF) from Shigella dysenteriae serotype 1 (strain Sd197).